A 91-amino-acid polypeptide reads, in one-letter code: Small ribosomal subunit protein uS19 (91 aa).

This sequence belongs to the universal ribosomal protein uS19 family.

Its function is as follows. Protein S19 forms a complex with S13 that binds strongly to the 16S ribosomal RNA. The polypeptide is Small ribosomal subunit protein uS19 (Sulfurimonas denitrificans (strain ATCC 33889 / DSM 1251) (Thiomicrospira denitrificans (strain ATCC 33889 / DSM 1251))).